The chain runs to 192 residues: CASP-like protein 4C1 (192 aa).

Residues 1-11 are compositionally biased toward polar residues; the sequence is MRSPQSLRNGE. The tract at residues 1 to 23 is disordered; it reads MRSPQSLRNGETPSPSPRPPRFP. The Cytoplasmic portion of the chain corresponds to 1–40; that stretch reads MRSPQSLRNGETPSPSPRPPRFPTPHFHSTVSLQKLKRFN. Residues 14 to 23 show a composition bias toward pro residues; that stretch reads SPSPRPPRFP. The helical transmembrane segment at 41 to 61 threads the bilayer; sequence LLILVFRLSTFCFSLASSVFM. Residues 62–75 lie on the Extracellular side of the membrane; it reads LTNPTWYHFDAFRY. Residues 76 to 96 form a helical membrane-spanning segment; that stretch reads VFAANAIVAIYSLFEMAASVW. Residues 97–107 are Cytoplasmic-facing; the sequence is EISRGNTLFPE. A helical transmembrane segment spans residues 108–128; sequence ILQVWFDFGHDQVFAYLLLSA. The Extracellular segment spans residues 129-156; sequence DSAATALAKTLKGGDTCAASNAFCVQSY. The helical transmembrane segment at 157 to 177 threads the bilayer; that stretch reads IAIALGFAGFLFLGLSSLLSG. The Cytoplasmic segment spans residues 178-192; sequence FRVVCFLINGSRFYV.

This sequence belongs to the Casparian strip membrane proteins (CASP) family. In terms of assembly, homodimer and heterodimers.

Its subcellular location is the cell membrane. The sequence is that of CASP-like protein 4C1 from Ricinus communis (Castor bean).